The chain runs to 1785 residues: Mellein synthase (1785 aa).

The disordered stretch occupies residues 1–36 (MATPDDPATPALSLSASNSSSPTAASSVPPPTGTSE). Low complexity predominate over residues 8–27 (ATPALSLSASNSSSPTAASS). The region spanning 39-464 (YDDVAIIGMS…GTVSHAIIEQ (426 aa)) is the Ketosynthase family 3 (KS3) domain. Catalysis depends on for beta-ketoacyl synthase activity residues Cys-211, His-346, and His-386. The malonyl-CoA:ACP transacylase (MAT) domain stretch occupies residues 575–888 (VWVFSGHGSH…AVAQLWTKGV (314 aa)). Catalysis depends on Ser-661, which acts as the For malonyltransferase activity. Residues 933–1047 (NNMLGQRMVV…ASWENEPSAN (115 aa)) form an N-terminal hotdog fold region. The PKS/mFAS DH domain maps to 933 to 1206 (NNMLGQRMVV…FTEVEATPTK (274 aa)). Residues 935 to 1203 (MLGQRMVVAG…SIRFTEVEAT (269 aa)) form a dehydratase (DH) domain region. The active-site Proton acceptor; for dehydratase activity is the His-965. The interval 1062–1206 (GTRVSETFSV…FTEVEATPTK (145 aa)) is C-terminal hotdog fold. Catalysis depends on Asp-1123, which acts as the Proton donor; for dehydratase activity. Positions 1418 to 1608 (GTYVLTGGLG…AIAFQWTAWR (191 aa)) are ketoreductase (KR) domain. Over residues 1681–1698 (QDQSAPASGNASDSSGRP) the composition is skewed to polar residues. Residues 1681–1701 (QDQSAPASGNASDSSGRPTAS) are disordered. The Carrier domain occupies 1706-1781 (PWLDVKIREC…AMVGWFQKQF (76 aa)). Ser-1741 carries the post-translational modification O-(pantetheine 4'-phosphoryl)serine.

The protein operates within secondary metabolite biosynthesis. Polyketide synthase that produces (R)-mellein, a secondary metabolite that inhibits the germination of wheat (Triticum aestivum) and barrel medic (Medicago truncatula) seeds. Condensates 1 acetate starter unit and 4 extender malonate units. The nascent pentaketide intermediate then undergoes an aldol cyclization and is aromatized via dehydration. The (R)-O-methylmellein isolated from P.nodorum is most likely to be derived from (R)-mellein via an additional methylation at the hydroxyl group. Interestingly, no O-methyltransferase gene is encoded in the vicinity of MLNS on the chromosome. Thus, the O-methylation is likely to be catalyzed by an endogenous O-methyltransferase encoded elsewhere in the genome of P.nodorum. In Phaeosphaeria nodorum (strain SN15 / ATCC MYA-4574 / FGSC 10173) (Glume blotch fungus), this protein is Mellein synthase.